A 113-amino-acid chain; its full sequence is Inner membrane protein YiaB (113 aa).

Over 1 to 9 the chain is Cytoplasmic; it reads MKTSKTVAK. The helical transmembrane segment at 10–20 threads the bilayer; the sequence is LLFVVGALVYL. Topologically, residues 21 to 33 are periplasmic; sequence VGLWISCPLLSGK. A helical membrane pass occupies residues 34-51; sequence GYFLGVLMTATFGNYAYL. At 52 to 61 the chain is on the cytoplasmic side; sequence RAEKLGQLDD. A helical transmembrane segment spans residues 62–82; the sequence is FFTHICQLVALITIGLLFIGV. The Periplasmic portion of the chain corresponds to 83-84; that stretch reads LN. Residues 85-105 form a helical membrane-spanning segment; the sequence is APINTYEMVIYPIAFFVCLFG. Residues 106–113 lie on the Cytoplasmic side of the membrane; the sequence is QMRLFRSA.

It localises to the cell inner membrane. This Escherichia coli (strain K12) protein is Inner membrane protein YiaB (yiaB).